Here is a 122-residue protein sequence, read N- to C-terminus: Large ribosomal subunit protein uL14 (122 aa).

This sequence belongs to the universal ribosomal protein uL14 family. Part of the 50S ribosomal subunit. Forms a cluster with proteins L3 and L19. In the 70S ribosome, L14 and L19 interact and together make contacts with the 16S rRNA in bridges B5 and B8.

Binds to 23S rRNA. Forms part of two intersubunit bridges in the 70S ribosome. In Campylobacter fetus subsp. fetus (strain 82-40), this protein is Large ribosomal subunit protein uL14.